A 257-amino-acid polypeptide reads, in one-letter code: Uroplakin-1a (257 aa).

At 1–13 (MASAATEGEKGSP) the chain is on the cytoplasmic side. The helical transmembrane segment at 14 to 34 (VVVGLLVVGNIIILLSGLALF) threads the bilayer. Residues 35-58 (AETVWVTADQYRVYPLMGVSGKDD) lie on the Extracellular side of the membrane. Residues 59–85 (VFAGAWIAIFCGFSFFVVASFGVGAAL) traverse the membrane as a helical segment. Residues 86–90 (CRRRY) lie on the Cytoplasmic side of the membrane. The chain crosses the membrane as a helical span at residues 91 to 111 (MILTYLLLMLIVYIFECASCI). The Extracellular segment spans residues 112 to 229 (TSYTHRDYMV…HIGHAIDSYT (118 aa)). A glycan (N-linked (GlcNAc...) asparagine) is linked at Asn-169. Residues 230-251 (WGISWFGFAILMWTLPVMLIAM) traverse the membrane as a helical segment. Over 252 to 257 (YFYTTL) the chain is Cytoplasmic.

The protein belongs to the tetraspanin (TM4SF) family. Homodimer; disulfide-linked. Interacts with uroplakin-2 (UPK2). Binds to uropathogenic E.coli fimH.

The protein resides in the membrane. In terms of biological role, component of the asymmetric unit membrane (AUM); a highly specialized biomembrane elaborated by terminally differentiated urothelial cells. May play an important role in normal bladder epithelial physiology, possibly in regulating membrane permeability of superficial umbrella cells or in stabilizing the apical membrane through AUM/cytoskeletal interactions. The chain is Uroplakin-1a (Upk1a) from Mus musculus (Mouse).